A 177-amino-acid chain; its full sequence is Large ribosomal subunit protein uL16 (177 aa).

This sequence belongs to the universal ribosomal protein uL16 family. Part of the 50S ribosomal subunit. Weakly binds 5S rRNA. Probably binds the A and P site tRNAs.

This is 1 of 5 proteins that mediate the attachment of the 5S rRNA onto the large ribosomal subunit, stabilizing the orientation of adjacent RNA domains. Modeling places the A and P site tRNAs in close proximity to this protein. This is Large ribosomal subunit protein uL16 from Haloarcula marismortui (strain ATCC 43049 / DSM 3752 / JCM 8966 / VKM B-1809) (Halobacterium marismortui).